Here is a 419-residue protein sequence, read N- to C-terminus: UDP-N-acetylglucosamine 1-carboxyvinyltransferase (419 aa).

22-23 (KN) contacts phosphoenolpyruvate. R93 contributes to the UDP-N-acetyl-alpha-D-glucosamine binding site. C117 acts as the Proton donor in catalysis. At C117 the chain carries 2-(S-cysteinyl)pyruvic acid O-phosphothioketal. Positions 307 and 329 each coordinate UDP-N-acetyl-alpha-D-glucosamine.

The protein belongs to the EPSP synthase family. MurA subfamily.

The protein resides in the cytoplasm. The catalysed reaction is phosphoenolpyruvate + UDP-N-acetyl-alpha-D-glucosamine = UDP-N-acetyl-3-O-(1-carboxyvinyl)-alpha-D-glucosamine + phosphate. It participates in cell wall biogenesis; peptidoglycan biosynthesis. Cell wall formation. Adds enolpyruvyl to UDP-N-acetylglucosamine. The chain is UDP-N-acetylglucosamine 1-carboxyvinyltransferase from Shewanella frigidimarina (strain NCIMB 400).